Reading from the N-terminus, the 596-residue chain is Transketolase-like protein 1 (596 aa).

Residue histidine 46 coordinates substrate. Thiamine diphosphate contacts are provided by residues serine 49 and 94–96; that span reads GWL. Aspartate 126 provides a ligand contact to Mg(2+). Residues valine 127 and asparagine 156 each coordinate thiamine diphosphate. 2 residues coordinate Mg(2+): asparagine 156 and leucine 158. The thiamine diphosphate site is built by lysine 218 and histidine 232. Substrate is bound by residues histidine 232, arginine 292, and serine 319. Positions 340 and 366 each coordinate thiamine diphosphate. Catalysis depends on glutamate 340, which acts as the Proton donor. Histidine 390 and aspartate 398 together coordinate substrate. Residue glutamine 402 participates in thiamine diphosphate binding. Arginine 448 is a substrate binding site.

It belongs to the transketolase family. Homodimer. Requires Mg(2+) as cofactor. The cofactor is Ca(2+). Mn(2+) serves as cofactor. Co(2+) is required as a cofactor. It depends on thiamine diphosphate as a cofactor.

Its subcellular location is the cytoplasm. The catalysed reaction is D-sedoheptulose 7-phosphate + D-glyceraldehyde 3-phosphate = aldehydo-D-ribose 5-phosphate + D-xylulose 5-phosphate. In terms of biological role, catalyzes the transfer of a two-carbon ketol group from a ketose donor to an aldose acceptor, via a covalent intermediate with the cofactor thiamine pyrophosphate. The sequence is that of Transketolase-like protein 1 (TKTL1) from Bos taurus (Bovine).